We begin with the raw amino-acid sequence, 642 residues long: Threonine--tRNA ligase (642 aa).

A TGS domain is found at 1–61 (MPVITLPDGS…VDDASVAIIT (61 aa)). The segment at 243-534 (DHRKIGKQLD…LTEEYAGFFP (292 aa)) is catalytic. Residues cysteine 334, histidine 385, and histidine 511 each coordinate Zn(2+).

It belongs to the class-II aminoacyl-tRNA synthetase family. Homodimer. The cofactor is Zn(2+).

Its subcellular location is the cytoplasm. The enzyme catalyses tRNA(Thr) + L-threonine + ATP = L-threonyl-tRNA(Thr) + AMP + diphosphate + H(+). Catalyzes the attachment of threonine to tRNA(Thr) in a two-step reaction: L-threonine is first activated by ATP to form Thr-AMP and then transferred to the acceptor end of tRNA(Thr). Also edits incorrectly charged L-seryl-tRNA(Thr). The sequence is that of Threonine--tRNA ligase from Erwinia tasmaniensis (strain DSM 17950 / CFBP 7177 / CIP 109463 / NCPPB 4357 / Et1/99).